Consider the following 99-residue polypeptide: Putative pterin-4-alpha-carbinolamine dehydratase (99 aa).

Belongs to the pterin-4-alpha-carbinolamine dehydratase family.

It catalyses the reaction (4aS,6R)-4a-hydroxy-L-erythro-5,6,7,8-tetrahydrobiopterin = (6R)-L-erythro-6,7-dihydrobiopterin + H2O. The polypeptide is Putative pterin-4-alpha-carbinolamine dehydratase (Bradyrhizobium sp. (strain BTAi1 / ATCC BAA-1182)).